Consider the following 108-residue polypeptide: Ribonuclease P protein component (108 aa).

This sequence belongs to the RnpA family. Consists of a catalytic RNA component (M1 or rnpB) and a protein subunit.

It carries out the reaction Endonucleolytic cleavage of RNA, removing 5'-extranucleotides from tRNA precursor.. Its function is as follows. RNaseP catalyzes the removal of the 5'-leader sequence from pre-tRNA to produce the mature 5'-terminus. It can also cleave other RNA substrates such as 4.5S RNA. The protein component plays an auxiliary but essential role in vivo by binding to the 5'-leader sequence and broadening the substrate specificity of the ribozyme. In Campylobacter jejuni subsp. doylei (strain ATCC BAA-1458 / RM4099 / 269.97), this protein is Ribonuclease P protein component.